The primary structure comprises 306 residues: Heterogeneous nuclear ribonucleoproteins C1/C2 (306 aa).

Ala2 is subject to N-acetylalanine. Glycyl lysine isopeptide (Lys-Gly) (interchain with G-Cter in SUMO2) cross-links involve residues Lys8, Lys50, Lys89, and Lys94. The region spanning 16–87 (SRVFIGNLNT…QVLDINLAAE (72 aa)) is the RRM domain. Phosphoserine is present on residues Ser107 and Val108. Thr109 bears the Phosphothreonine mark. Phosphoserine is present on residues Ser113, Ser115, and Ser121. Disordered stretches follow at residues 139-190 (YPAR…KLKG) and 221-306 (QSKQ…EDDS). A Nuclear localization signal motif is present at residues 155 to 161 (PSKRQRV). Phosphoserine occurs at positions 162 and 166. Residues 175–185 (SKSGQRGSSKS) show a composition bias toward low complexity. Lys176 carries the post-translational modification N6-acetyllysine; alternate. Residue Lys176 forms a Glycyl lysine isopeptide (Lys-Gly) (interchain with G-Cter in SUMO2); alternate linkage. Residues 190–238 (GDDLQAIKKELTQIKQKVDSLLENLEKIEKEQSKQAVEMKNDKSEEEQS) are a coiled coil. Basic and acidic residues predominate over residues 221–232 (QSKQAVEMKNDK). Residues Lys223 and Lys229 each participate in a glycyl lysine isopeptide (Lys-Gly) (interchain with G-Cter in SUMO2) cross-link. Residue Lys232 forms a Glycyl lysine isopeptide (Lys-Gly) (interchain with G-Cter in SUMO2); alternate linkage. A Glycyl lysine isopeptide (Lys-Gly) (interchain with G-Cter in SUMO1); alternate cross-link involves residue Lys232. Phosphoserine is present on residues Ser233, Ser238, Ser239, and Ser241. Residues 242-253 (VKKDETNVKMES) are compositionally biased toward basic and acidic residues. Residues Lys243 and Lys244 each participate in a glycyl lysine isopeptide (Lys-Gly) (interchain with G-Cter in SUMO2) cross-link. Lys250 is covalently cross-linked (Glycyl lysine isopeptide (Lys-Gly) (interchain with G-Cter in SUMO2); alternate). Lys250 is covalently cross-linked (Glycyl lysine isopeptide (Lys-Gly) (interchain with G-Cter in SUMO); alternate). A phosphoserine mark is found at Ser253 and Ser260. Positions 255-276 (GGADDSAEEGDLLDDDDNEDRG) are enriched in acidic residues. Basic and acidic residues predominate over residues 277–287 (DDQLELIKDDE). The span at 288–306 (KEAEEGEDDRDSANGEDDS) shows a compositional bias: acidic residues. Residues Ser299 and Ser306 each carry the phosphoserine modification.

The protein belongs to the RRM HNRPC family. RALY subfamily. As to quaternary structure, tetramer composed of 3 copies of isoform C1 and 1 copy of isoform C2. Assembly of 3 tetramers with bound pre-mRNA gives rise to a 19S complex that interacts with HNRNPA2B1 tetramers. Component of the 40S hnRNP particle. Identified in the spliceosome C complex. Interacts with IGF2BP1. Interacts with DHX9; this interaction is direct, enhanced probably by their concomitant binding to RNA and mediates the attachment to actin filaments. Interacts with PPIA/CYPA. Interacts with YWHAE. In terms of processing, phosphorylated on Ser-260 and Ser-299 in resting cells. Phosphorylated on Ser-253 and on 1 serine residue in the poly-Ser stretch at position 238 in response to hydrogen peroxide. Sumoylated. Sumoylation reduces affinity for mRNA. Post-translationally, ubiquitinated and degraded after nucleo-cytoplasmic transport by YWHAE.

Its subcellular location is the nucleus. Binds pre-mRNA and nucleates the assembly of 40S hnRNP particles. Interacts with poly-U tracts in the 3'-UTR or 5'-UTR of mRNA and modulates the stability and the level of translation of bound mRNA molecules. Single HNRNPC tetramers bind 230-240 nucleotides. Trimers of HNRNPC tetramers bind 700 nucleotides. May play a role in the early steps of spliceosome assembly and pre-mRNA splicing. N6-methyladenosine (m6A) has been shown to alter the local structure in mRNAs and long non-coding RNAs (lncRNAs) via a mechanism named 'm(6)A-switch', facilitating binding of HNRNPC, leading to regulation of mRNA splicing. The sequence is that of Heterogeneous nuclear ribonucleoproteins C1/C2 (HNRNPC) from Homo sapiens (Human).